An 879-amino-acid polypeptide reads, in one-letter code: Alanine--tRNA ligase (879 aa).

The Zn(2+) site is built by His566, His570, Cys668, and His672.

Belongs to the class-II aminoacyl-tRNA synthetase family. It depends on Zn(2+) as a cofactor.

Its subcellular location is the cytoplasm. The catalysed reaction is tRNA(Ala) + L-alanine + ATP = L-alanyl-tRNA(Ala) + AMP + diphosphate. In terms of biological role, catalyzes the attachment of alanine to tRNA(Ala) in a two-step reaction: alanine is first activated by ATP to form Ala-AMP and then transferred to the acceptor end of tRNA(Ala). Also edits incorrectly charged Ser-tRNA(Ala) and Gly-tRNA(Ala) via its editing domain. The polypeptide is Alanine--tRNA ligase (Listeria welshimeri serovar 6b (strain ATCC 35897 / DSM 20650 / CCUG 15529 / CIP 8149 / NCTC 11857 / SLCC 5334 / V8)).